An 852-amino-acid chain; its full sequence is Taste receptor type 1 member 3 (852 aa).

The N-terminal stretch at 1 to 20 (MLGPAVLGLSLWALLHPGTG) is a signal peptide. At 21–570 (APLCLSQQLR…FLAWGEPAVL (550 aa)) the chain is on the extracellular side. Asn-85, Asn-130, Asn-264, Asn-285, Asn-380, Asn-411, Asn-432, and Asn-475 each carry an N-linked (GlcNAc...) asparagine glycan. A required for brazzein responsiveness region spans residues 536 to 545 (IACTFCGQDE). Residues 571–591 (LLLLLLSLALGLVLAALGLFV) traverse the membrane as a helical segment. The Cytoplasmic portion of the chain corresponds to 592 to 603 (HHRDSPLVQASG). Residues 604–624 (GPLACFGLVCLGLVCLSVLLF) traverse the membrane as a helical segment. Residues 625–639 (PGQPSPARCLAQQPL) are Extracellular-facing. A helical transmembrane segment spans residues 640–660 (SHLPLTGCLSTLFLQAAEIFV). Residues 661–682 (ESELPLSWADRLSGCLRGPWAW) lie on the Cytoplasmic side of the membrane. A helical transmembrane segment spans residues 683 to 703 (LVVLLAMLVEVALCTWYLVAF). The Extracellular portion of the chain corresponds to 704–729 (PPEVVTDWHMLPTEALVHCRTRSWVS). The helical transmembrane segment at 730–750 (FGLAHATNATLAFLCFLGTFL) threads the bilayer. Residues 751–762 (VRSQPGCYNRAR) lie on the Cytoplasmic side of the membrane. Residues 763 to 783 (GLTFAMLAYFITWVSFVPLLA) form a helical membrane-spanning segment. Residues 784 to 789 (NVQVVL) lie on the Extracellular side of the membrane. Residues 790–810 (RPAVQMGALLLCVLGILAAFH) form a helical membrane-spanning segment. Residues 811–852 (LPRCYLLMRQPGLNTPEFFLGGGPGDAQGQNDGNTGNQGKHE) are Cytoplasmic-facing.

This sequence belongs to the G-protein coupled receptor 3 family. TAS1R subfamily. In terms of assembly, forms homodimers or heterodimers with TAS1R1 and TAS1R2.

It localises to the cell membrane. In terms of biological role, putative taste receptor. TAS1R1/TAS1R3 responds to the umami taste stimulus (the taste of monosodium glutamate). TAS1R2/TAS1R3 recognizes diverse natural and synthetic sweeteners. TAS1R3 is essential for the recognition and response to the disaccharide trehalose. Sequence differences within and between species can significantly influence the selectivity and specificity of taste responses. The chain is Taste receptor type 1 member 3 (TAS1R3) from Homo sapiens (Human).